Here is a 181-residue protein sequence, read N- to C-terminus: Ribulose bisphosphate carboxylase small subunit, chloroplastic 2 (181 aa).

The transit peptide at 1 to 54 (MASSMLSSAAVVTSPAQATMVAPFTGLKSSAAFPVTRKANNDITSIASNGGRVS) directs the protein to the chloroplast.

It belongs to the RuBisCO small chain family. As to quaternary structure, heterohexadecamer of 8 large and 8 small subunits.

The protein localises to the plastid. It localises to the chloroplast. Functionally, ruBisCO catalyzes two reactions: the carboxylation of D-ribulose 1,5-bisphosphate, the primary event in carbon dioxide fixation, as well as the oxidative fragmentation of the pentose substrate. Both reactions occur simultaneously and in competition at the same active site. Although the small subunit is not catalytic it is essential for maximal activity. This is Ribulose bisphosphate carboxylase small subunit, chloroplastic 2 from Brassica napus (Rape).